The chain runs to 260 residues: Small ribosomal subunit protein uS2 (260 aa).

The protein belongs to the universal ribosomal protein uS2 family.

The polypeptide is Small ribosomal subunit protein uS2 (rpsB) (Borreliella burgdorferi (strain ATCC 35210 / DSM 4680 / CIP 102532 / B31) (Borrelia burgdorferi)).